The chain runs to 143 residues: Transcription antitermination protein NusB (143 aa).

This sequence belongs to the NusB family.

Functionally, involved in transcription antitermination. Required for transcription of ribosomal RNA (rRNA) genes. Binds specifically to the boxA antiterminator sequence of the ribosomal RNA (rrn) operons. This is Transcription antitermination protein NusB from Clostridium botulinum (strain ATCC 19397 / Type A).